We begin with the raw amino-acid sequence, 319 residues long: Chromoplast-specific carotenoid-associated protein C2, chromoplastic (319 aa).

Residues 1 to 55 constitute a chromoplast transit peptide; it reads MTSIAFCNAFTVNPFLAAARRSPPPLTPLTSVALSPARKPRILAIFHPRTFPSFR.

The protein belongs to the PAP/fibrillin family.

It localises to the plastid. Its subcellular location is the chromoplast. In terms of biological role, may be involved in carotenoid sequestration within chromoplasts. In Oncidium hybrid cultivar (Orchid), this protein is Chromoplast-specific carotenoid-associated protein C2, chromoplastic (CHRC2).